We begin with the raw amino-acid sequence, 308 residues long: Tyrosine recombinase XerD (308 aa).

Positions 13-97 (PSSTEAIQRF…VFKRFFQWAL (85 aa)) constitute a Core-binding (CB) domain. The 185-residue stretch at 118 to 302 (RVPKTLSEAQ…ARERLRTLHA (185 aa)) folds into the Tyr recombinase domain. Residues arginine 158, lysine 183, histidine 254, arginine 257, and histidine 280 contribute to the active site. Residue tyrosine 289 is the O-(3'-phospho-DNA)-tyrosine intermediate of the active site.

It belongs to the 'phage' integrase family. XerD subfamily. Forms a cyclic heterotetrameric complex composed of two molecules of XerC and two molecules of XerD.

It localises to the cytoplasm. Its function is as follows. Site-specific tyrosine recombinase, which acts by catalyzing the cutting and rejoining of the recombining DNA molecules. The XerC-XerD complex is essential to convert dimers of the bacterial chromosome into monomers to permit their segregation at cell division. It also contributes to the segregational stability of plasmids. This chain is Tyrosine recombinase XerD, found in Ralstonia nicotianae (strain ATCC BAA-1114 / GMI1000) (Ralstonia solanacearum).